Reading from the N-terminus, the 138-residue chain is Large ribosomal subunit protein uL16 (138 aa).

The protein belongs to the universal ribosomal protein uL16 family. In terms of assembly, part of the 50S ribosomal subunit.

Its function is as follows. Binds 23S rRNA and is also seen to make contacts with the A and possibly P site tRNAs. The protein is Large ribosomal subunit protein uL16 of Acholeplasma laidlawii (strain PG-8A).